Reading from the N-terminus, the 223-residue chain is Holliday junction branch migration complex subunit RuvA (223 aa).

The domain I stretch occupies residues 1–64; sequence MIGRIAGVIL…EDLLQLFGFP (64 aa). Residues 65 to 143 are domain II; it reads TLLEKEWHRL…AVMALGGALT (79 aa). Residues 144 to 169 are flexible linker; the sequence is VDPGPLPEVELVEAAVPAPVPAKAAP. The interval 170 to 223 is domain III; sequence SSAQATADALSALGNLGYAPSEAASAVAEAAAREPAAPTAALIRAALRLLAPKE.

Belongs to the RuvA family. In terms of assembly, homotetramer. Forms an RuvA(8)-RuvB(12)-Holliday junction (HJ) complex. HJ DNA is sandwiched between 2 RuvA tetramers; dsDNA enters through RuvA and exits via RuvB. An RuvB hexamer assembles on each DNA strand where it exits the tetramer. Each RuvB hexamer is contacted by two RuvA subunits (via domain III) on 2 adjacent RuvB subunits; this complex drives branch migration. In the full resolvosome a probable DNA-RuvA(4)-RuvB(12)-RuvC(2) complex forms which resolves the HJ.

It is found in the cytoplasm. In terms of biological role, the RuvA-RuvB-RuvC complex processes Holliday junction (HJ) DNA during genetic recombination and DNA repair, while the RuvA-RuvB complex plays an important role in the rescue of blocked DNA replication forks via replication fork reversal (RFR). RuvA specifically binds to HJ cruciform DNA, conferring on it an open structure. The RuvB hexamer acts as an ATP-dependent pump, pulling dsDNA into and through the RuvAB complex. HJ branch migration allows RuvC to scan DNA until it finds its consensus sequence, where it cleaves and resolves the cruciform DNA. The protein is Holliday junction branch migration complex subunit RuvA of Paracoccus denitrificans (strain Pd 1222).